The primary structure comprises 711 residues: Protein Smaug homolog 1 (711 aa).

Serine 168 is subject to Phosphoserine. Residues alanine 278–serine 323 form a disordered region. The SAM domain maps to serine 323–glutamate 396. Residue serine 420 is modified to Phosphoserine. 2 disordered regions span residues serine 422 to alanine 448 and asparagine 565 to asparagine 588. Residue threonine 424 is modified to Phosphothreonine. Arginine 566 carries the post-translational modification Omega-N-methylarginine. Over residues phenylalanine 568–glycine 581 the composition is skewed to polar residues. Serine 573 is modified (phosphoserine).

The protein belongs to the SMAUG family. As to expression, expressed in brain (at protein level).

It is found in the cytoplasm. The protein resides in the cell projection. The protein localises to the dendrite. It localises to the synapse. Its subcellular location is the synaptosome. Acts as a translational repressor of SRE-containing messengers. The polypeptide is Protein Smaug homolog 1 (Samd4a) (Mus musculus (Mouse)).